A 159-amino-acid polypeptide reads, in one-letter code: Ribosomal RNA large subunit methyltransferase H (159 aa).

S-adenosyl-L-methionine-binding positions include leucine 76, glycine 108, and 127-132 (FSRMTF).

This sequence belongs to the RNA methyltransferase RlmH family. Homodimer.

It localises to the cytoplasm. It carries out the reaction pseudouridine(1915) in 23S rRNA + S-adenosyl-L-methionine = N(3)-methylpseudouridine(1915) in 23S rRNA + S-adenosyl-L-homocysteine + H(+). Its function is as follows. Specifically methylates the pseudouridine at position 1915 (m3Psi1915) in 23S rRNA. The protein is Ribosomal RNA large subunit methyltransferase H of Bacillus licheniformis (strain ATCC 14580 / DSM 13 / JCM 2505 / CCUG 7422 / NBRC 12200 / NCIMB 9375 / NCTC 10341 / NRRL NRS-1264 / Gibson 46).